The chain runs to 290 residues: Sodium/potassium-transporting ATPase subunit beta-2 (290 aa).

At 1 to 39 (MVIQKEKKSCGQVVEEWKEFVWNPRTHQFMGRTGTSWAF) the chain is on the cytoplasmic side. The helical; Signal-anchor for type II membrane protein transmembrane segment at 40 to 67 (ILLFYLVFYGFLTAMFTLTMWVMLQTVS) threads the bilayer. Residues 68-290 (DHTPKYQDRL…VAFKLRINKA (223 aa)) are Extracellular-facing. Residues N96 and N118 are each glycosylated (N-linked (GlcNAc...) asparagine). C129 and C150 are oxidised to a cystine. N-linked (GlcNAc...) asparagine glycans are attached at residues N153 and N159. An intrachain disulfide couples C160 to C177. N-linked (GlcNAc...) asparagine glycosylation is found at N193, N197, and N238. The immunoglobulin-like stretch occupies residues 193 to 290 (NQSMNVTCVG…VAFKLRINKA (98 aa)). A disulfide bridge connects residues C200 and C261.

Belongs to the X(+)/potassium ATPases subunit beta family. The sodium/potassium-transporting ATPase is composed of a catalytic alpha subunit, an auxiliary non-catalytic beta subunit and an additional regulatory subunit. Interacts with isoform 2 of BSG. As to expression, highly expressed in brain (at protein level).

The protein localises to the cell membrane. This is the non-catalytic component of the active enzyme, which catalyzes the hydrolysis of ATP coupled with the exchange of Na(+) and K(+) ions across the plasma membrane. The exact function of the beta-2 subunit is not known. Its function is as follows. Mediates cell adhesion of neurons and astrocytes, and promotes neurite outgrowth. The polypeptide is Sodium/potassium-transporting ATPase subunit beta-2 (Atp1b2) (Rattus norvegicus (Rat)).